The sequence spans 429 residues: 3-phosphoshikimate 1-carboxyvinyltransferase (429 aa).

Lysine 23, serine 24, and arginine 28 together coordinate 3-phosphoshikimate. Phosphoenolpyruvate is bound at residue lysine 23. Phosphoenolpyruvate-binding residues include glycine 95 and arginine 123. The 3-phosphoshikimate site is built by serine 168, glutamine 170, aspartate 316, and lysine 343. Position 170 (glutamine 170) interacts with phosphoenolpyruvate. Aspartate 316 functions as the Proton acceptor in the catalytic mechanism. Residues arginine 347 and arginine 389 each coordinate phosphoenolpyruvate.

This sequence belongs to the EPSP synthase family. Monomer.

Its subcellular location is the cytoplasm. The catalysed reaction is 3-phosphoshikimate + phosphoenolpyruvate = 5-O-(1-carboxyvinyl)-3-phosphoshikimate + phosphate. It functions in the pathway metabolic intermediate biosynthesis; chorismate biosynthesis; chorismate from D-erythrose 4-phosphate and phosphoenolpyruvate: step 6/7. Functionally, catalyzes the transfer of the enolpyruvyl moiety of phosphoenolpyruvate (PEP) to the 5-hydroxyl of shikimate-3-phosphate (S3P) to produce enolpyruvyl shikimate-3-phosphate and inorganic phosphate. The chain is 3-phosphoshikimate 1-carboxyvinyltransferase from Bacillus thuringiensis (strain Al Hakam).